The sequence spans 151 residues: Cell division protein SepF (151 aa).

This sequence belongs to the SepF family. In terms of assembly, homodimer. Interacts with FtsZ.

It localises to the cytoplasm. Cell division protein that is part of the divisome complex and is recruited early to the Z-ring. Probably stimulates Z-ring formation, perhaps through the cross-linking of FtsZ protofilaments. Its function overlaps with FtsA. This chain is Cell division protein SepF, found in Desulfitobacterium hafniense (strain Y51).